The sequence spans 177 residues: MELPPKVKNILLLDSEGKRVAVKYYSDDWPTNSAQEAFEKSVFTKTQKTNARTEVEVTALENNIVVYKFVQDLHFFVTGGEEENELILASVLEGLFDAVTLLLRSNVDKREALDNLDLIFLSFDEIIDGGIVLETDANVIAGKAGINSTDPNAPLSEQTISQALATAREHLTRSLMK.

The protein belongs to the adaptor complexes small subunit family. Oligomeric complex that consists of at least the alpha, beta, beta', gamma, delta, epsilon and zeta subunits.

The protein resides in the cytoplasm. Its subcellular location is the golgi apparatus membrane. The protein localises to the cytoplasmic vesicle. It localises to the COPI-coated vesicle membrane. Functionally, the coatomer is a cytosolic protein complex that binds to dilysine motifs and reversibly associates with Golgi non-clathrin-coated vesicles, which further mediate biosynthetic protein transport from the ER, via the Golgi up to the trans Golgi network. Coatomer complex is required for budding from Golgi membranes, and is essential for the retrograde Golgi-to-ER transport of dilysine-tagged proteins. The zeta subunit may be involved in regulating the coat assembly and, hence, the rate of biosynthetic protein transport due to its association-dissociation properties with the coatomer complex. The polypeptide is Coatomer subunit zeta-1 (Arabidopsis thaliana (Mouse-ear cress)).